A 122-amino-acid chain; its full sequence is uncharacterized protein (122 aa).

This is an uncharacterized protein from Schizosaccharomyces pombe (strain 972 / ATCC 24843) (Fission yeast).